Here is a 502-residue protein sequence, read N- to C-terminus: ATP synthase subunit alpha 1/3 (502 aa).

169 to 176 (GDRQTGKT) is an ATP binding site.

Belongs to the ATPase alpha/beta chains family. In terms of assembly, F-type ATPases have 2 components, CF(1) - the catalytic core - and CF(0) - the membrane proton channel. CF(1) has five subunits: alpha(3), beta(3), gamma(1), delta(1), epsilon(1). CF(0) has three main subunits: a(1), b(2) and c(9-12). The alpha and beta chains form an alternating ring which encloses part of the gamma chain. CF(1) is attached to CF(0) by a central stalk formed by the gamma and epsilon chains, while a peripheral stalk is formed by the delta and b chains.

It is found in the cell inner membrane. The enzyme catalyses ATP + H2O + 4 H(+)(in) = ADP + phosphate + 5 H(+)(out). Its function is as follows. Produces ATP from ADP in the presence of a proton gradient across the membrane. The alpha chain is a regulatory subunit. The chain is ATP synthase subunit alpha 1/3 from Syntrophotalea carbinolica (strain DSM 2380 / NBRC 103641 / GraBd1) (Pelobacter carbinolicus).